The chain runs to 637 residues: MSIITTAFALSLLATTAFAVPPETPRIELQAERGLGDQSYAPWQVDCPSNVTWIRNATTGLGTGERAYIEAREKLVQPAIEQMMAARGLETPPRTPVIGVALAGGGYRAMLTGLGGIMGMMNESTEASQSETGGWLDGVSYWSGLSGGSWATGSFMSNGGQLPTTLLENLWNIDSNLVFPDDGKLSFYTNLYTETNAKSDLGFPVQITDIWGLAIGSHVLPEPYQLSNTPNLTFSSLPSVVAALGNASLPMPIIVAADRKRREAGELVIAENATVWEFTPYEFGSWAFGSQYKSPGAFTPIEYLGTSVDDGSPNGTCWKGFDQLSFVMGTSATLFNGAFLELNGTDSGLLTNLITAFLADLGEDQADISRIPNSFSNYNSGENPIYNLTYITLVDAGETNQNIPLEPLLVPTRDVDAIVAFDSSYDSDYIWPNGTALRTTYERAKILAEHENTRVLMPEVPSMNGFVNGGYNSRPTFFGCNDTTTPVIIYIPSYPWSFAANTSTYQLSYENNEANEMLLNGMRSLTLNHSVPTWPTCFACALTDRSFMYTSENRSTTCQECFDTWCWAGDDNTTEPANYEPVINSVPPWLIANNLSIGMADAPGSNESTAGTASSGAAKMGVGMGMVALTAGLGLML.

The first 19 residues, 1–19, serve as a signal peptide directing secretion; sequence MSIITTAFALSLLATTAFA. Residues 46–572 form the PLA2c domain; sequence DCPSNVTWIR…DTWCWAGDDN (527 aa). 17 N-linked (GlcNAc...) asparagine glycosylation sites follow: Asn50, Asn56, Asn122, Asn231, Asn246, Asn272, Asn314, Asn343, Asn387, Asn433, Asn481, Asn501, Asn528, Asn553, Asn572, Asn594, and Asn606.

This sequence belongs to the lysophospholipase family. N-glycosylated.

The protein localises to the secreted. The catalysed reaction is a 1-acyl-sn-glycero-3-phosphocholine + H2O = sn-glycerol 3-phosphocholine + a fatty acid + H(+). Functionally, exhibits phospholipase B (PLB), lysophospholipase (LPL) and lysophospholipase/transacylase (LPTA) activities. This chain is Phospholipase B (PLB1), found in Cryptococcus neoformans var. neoformans serotype D (strain B-3501A) (Filobasidiella neoformans).